Reading from the N-terminus, the 198-residue chain is Protein RD3-like (198 aa).

The stretch at 28 to 57 forms a coiled coil; that stretch reads KTLLRELKWHLKERERLIQEIENEQKVKKT. The disordered stretch occupies residues 133-168; that stretch reads GSEQEDLEDSGSMDCSAPSVIQGDSSKRADKDEIPT. Over residues 157 to 166 the composition is skewed to basic and acidic residues; sequence SSKRADKDEI.

The polypeptide is Protein RD3-like (RD3L) (Homo sapiens (Human)).